A 626-amino-acid chain; its full sequence is Pheromone B alpha 3 receptor (626 aa).

Transmembrane regions (helical) follow at residues 8 to 28, 36 to 56, 70 to 90, 113 to 133, 163 to 183, 208 to 228, and 271 to 291; these read LFPT…PWHL, CFFM…SIVW, ISIR…LCII, IIID…MQYI, IWPV…LIEF, LMAL…FVIV, and ELTR…FGFA. Disordered stretches follow at residues 363–409, 481–509, 524–549, and 571–626; these read KQYT…SSPI, ATFT…SSSA, STTD…RLPS, and QDVA…RASV. A compositionally biased stretch (low complexity) spans 376–391; sequence SSSGFSSSESTRFGSS. Over residues 574 to 606 the composition is skewed to low complexity; it reads ATGTAAPTTTAPAPASTTIAPATTTATAPTTTA.

This sequence belongs to the G-protein coupled receptor 4 family.

It localises to the membrane. Its function is as follows. Receptor for the BAP3 pheromone, a prenylated mating factor. The chain is Pheromone B alpha 3 receptor (BAR3) from Schizophyllum commune (strain H4-8 / FGSC 9210) (Split gill fungus).